The primary structure comprises 162 residues: Shikimate kinase (162 aa).

10–15 (GAGKST) contacts ATP. Ser-14 serves as a coordination point for Mg(2+). Substrate contacts are provided by Asp-28, Arg-52, and Gly-73. Residue Arg-113 participates in ATP binding. Arg-129 lines the substrate pocket.

This sequence belongs to the shikimate kinase family. In terms of assembly, monomer. Mg(2+) serves as cofactor.

It localises to the cytoplasm. It catalyses the reaction shikimate + ATP = 3-phosphoshikimate + ADP + H(+). It participates in metabolic intermediate biosynthesis; chorismate biosynthesis; chorismate from D-erythrose 4-phosphate and phosphoenolpyruvate: step 5/7. Functionally, catalyzes the specific phosphorylation of the 3-hydroxyl group of shikimic acid using ATP as a cosubstrate. The sequence is that of Shikimate kinase from Lactococcus lactis subsp. cremoris (strain SK11).